We begin with the raw amino-acid sequence, 873 residues long: MGLKARRAAGAAGGGGGEGGGGGGGAANPAGGDSAVAGDEERKVGLAPGDVEQVTLALGAGADKDGTLLLEGGGREEGQRRTPQGIGLLAKTPLSRPVKRNNAKYRRIQTLIYDALERPRGWALLYHALVFLIVLGCLILAVLTTFKEYETVSGDWLLLLETFAIFIFGAEFALRIWAAGCCCRYKGWRGRLKFARKPLCMLDIFVLIASVPVVAVGNQGNVLATSLRSLRFLQILRMLRMDRRGGTWKLLGSAICAHSKELITAWYIGFLTLILSSFLVYLVEKDVPEMDAQGEEMKEEFETYADALWWGLITLATIGYGDKTPKTWEGRLIAATFSLIGVSFFALPAGILGSGLALKVQEQHRQKHFEKRRKPAAELIQAAWRYYATNPNRLDLVATWRFYESVVSFPFFRKEQLEAAASQKLGLLDRVRLSNPRGSNTKGKLFTPLNVDAIEESPSKEPKPVGLNNKERFRTAFRMKAYAFWQSSEDAGTGDPMAEDRGYGNDFLIEDMIPTLKAAIRAVRILQFRLYKKKFKETLRPYDVKDVIEQYSAGHLDMLSRIKYLQTRIDMIFTPGPPSTPKHKKSQKGSAFTYPSQQSPRNEPYVARAATSETEDQSMMGKFVKVERQVHDMGKKLDFLVDMHMQHMERLQVHVTEYYPTKGASSPAEGEKKEDNRYSDLKTIICNYSETGPPDPPYSFHQVPIDRVGPYGFFAHDPVKLTRGGPSSTKAQANLPSSGSTYAERPTVLPILTLLDSCVSYHSQTELQGPYSDHISPRQRRSITRDSDTPLSLMSVNHEELERSPSGFSISQDRDDYVFGPSGGSSWMREKRYLAEGETDTDTDPFTPSGSMPMSSTGDGISDSIWTPSNKPT.

Positions 1–41 are disordered; sequence MGLKARRAAGAAGGGGGEGGGGGGGAANPAGGDSAVAGDEE. At 1 to 121 the chain is on the cytoplasmic side; the sequence is MGLKARRAAG…IYDALERPRG (121 aa). The segment covering 11–26 has biased composition (gly residues); it reads AAGGGGGEGGGGGGGA. At Thr-82 the chain carries Phosphothreonine. The helical transmembrane segment at 122–144 threads the bilayer; sequence WALLYHALVFLIVLGCLILAVLT. Topologically, residues 145–154 are extracellular; that stretch reads TFKEYETVSG. A helical transmembrane segment spans residues 155-176; sequence DWLLLLETFAIFIFGAEFALRI. At 177 to 194 the chain is on the cytoplasmic side; it reads WAAGCCCRYKGWRGRLKF. Residues 195 to 214 traverse the membrane as a helical segment; that stretch reads ARKPLCMLDIFVLIASVPVV. Over 215 to 226 the chain is Extracellular; that stretch reads AVGNQGNVLATS. The helical; Voltage-sensor transmembrane segment at 227–245 threads the bilayer; it reads LRSLRFLQILRMLRMDRRG. A 1,2-diacyl-sn-glycero-3-phospho-(1D-myo-inositol-4,5-bisphosphate) is bound at residue Arg-244. At 246–257 the chain is on the cytoplasmic side; that stretch reads GTWKLLGSAICA. Residues 258 to 283 form a helical membrane-spanning segment; that stretch reads HSKELITAWYIGFLTLILSSFLVYLV. Residue Lys-260 participates in a 1,2-diacyl-sn-glycero-3-phospho-(1D-myo-inositol-4,5-bisphosphate) binding. The Extracellular segment spans residues 284–303; sequence EKDVPEMDAQGEEMKEEFET. The segment at residues 304–316 is an intramembrane region (pore-forming); the sequence is YADALWWGLITLA. A Selectivity filter motif is present at residues 317–322; that stretch reads TIGYGD. At 317–327 the chain is on the extracellular side; the sequence is TIGYGDKTPKT. A helical transmembrane segment spans residues 328–354; the sequence is WEGRLIAATFSLIGVSFFALPAGILGS. The Cytoplasmic portion of the chain corresponds to 355–873; sequence GLALKVQEQH…SIWTPSNKPT (519 aa). Positions 357–538 are mediates interaction with calmodulin; it reads ALKVQEQHRQ…RLYKKKFKET (182 aa). Residue Lys-367 participates in a 1,2-diacyl-sn-glycero-3-phospho-(1D-myo-inositol-4,5-bisphosphate) binding. 3 disordered regions span residues 575–603, 723–742, and 766–873; these read PGPPSTPKHKKSQKGSAFTYPSQQSPRNE, RGGPSSTKAQANLPSSGSTY, and ELQG…NKPT. 3 stretches are compositionally biased toward polar residues: residues 588-601, 725-741, and 844-873; these read KGSAFTYPSQQSPR, GPSSTKAQANLPSSGST, and DPFTPSGSMPMSSTGDGISDSIWTPSNKPT.

The protein belongs to the potassium channel family. KQT (TC 1.A.1.15) subfamily. Kv7.3/KCNQ3 sub-subfamily. Heterotetramer with KCNQ2; forms heterotetrameric native M-channel responsible for the M-current. Interacts with calmodulin; the interaction is calcium-independent, constitutive and participates in the proper assembly of a functional M-channel. Heteromultimer with KCNQ5. May associate with KCNE2. Interacts with IQCJ-SCHIP1. Interacts (via the pore module) with SLC5A3/SMIT1; forms a coregulatory complex that alters ion selectivity, voltage dependence and gating kinetics of the channel. KCNQ2/KCNQ3 are ubiquitinated by NEDD4L. Ubiquitination leads to protein degradation. Degradation induced by NEDD4L is inhibited by USP36. As to expression, expressed in dorsal root ganglion (DRG) neurons.

Its subcellular location is the cell membrane. The enzyme catalyses K(+)(in) = K(+)(out). It carries out the reaction Rb(+)(in) = Rb(+)(out). It catalyses the reaction Cs(+)(in) = Cs(+)(out). The catalysed reaction is Na(+)(in) = Na(+)(out). Its activity is regulated as follows. Phosphatidylinositol-4,5-bisphosphate (PIP2) potentiates the activation of KCNQ channels by enhancing the electro-mechanical coupling of the voltage-sensing domain (VSD) and the pore-forming domain (PD). In the closed state of the channel, PIP2 is anchored at the S2-S3 loop; upon channel activation, PIP2 interacts with the S4-S5 linker and is involved in channel gating. Calcium suppresses KCNQ2-KCNQ3 channel currents, with calcium-bound calmodulin inducing a change in channel configuration which leads to the reduction of channel affinity for PIP2 and subsequent current suppression. Functionally, pore-forming subunit of the voltage-gated potassium (Kv) M-channel which is responsible for the M-current, a key controller of neuronal excitability. M-channel is composed of pore-forming subunits KCNQ2 and KCNQ3 assembled as heterotetramers. The native M-current has a slowly activating and deactivating potassium conductance which plays a critical role in determining the subthreshold electrical excitability of neurons as well as the responsiveness to synaptic inputs. M-channel is selectively permeable in vitro to other cations besides potassium, in decreasing order of affinity K(+) &gt; Rb(+) &gt; Cs(+) &gt; Na(+). M-channel association with SLC5A3/SMIT1 alters channel ion selectivity, increasing Na(+) and Cs(+) permeation relative to K(+). Suppressed by activation of M1 muscarinic acetylcholine receptors. KCNQ3 also associates with KCNQ5 to form a functional channel in vitro and may also contribute to the M-current in brain. This Mus musculus (Mouse) protein is Potassium voltage-gated channel subfamily KQT member 3.